A 120-amino-acid chain; its full sequence is Aspartate 1-decarboxylase (120 aa).

The Schiff-base intermediate with substrate; via pyruvic acid role is filled by S25. The residue at position 25 (S25) is a Pyruvic acid (Ser). T57 is a binding site for substrate. The active-site Proton donor is Y58. 73–75 (GAA) is a substrate binding site.

The protein belongs to the PanD family. In terms of assembly, heterooctamer of four alpha and four beta subunits. The cofactor is pyruvate. Post-translationally, is synthesized initially as an inactive proenzyme, which is activated by self-cleavage at a specific serine bond to produce a beta-subunit with a hydroxyl group at its C-terminus and an alpha-subunit with a pyruvoyl group at its N-terminus.

It is found in the cytoplasm. The enzyme catalyses L-aspartate + H(+) = beta-alanine + CO2. It participates in cofactor biosynthesis; (R)-pantothenate biosynthesis; beta-alanine from L-aspartate: step 1/1. Catalyzes the pyruvoyl-dependent decarboxylation of aspartate to produce beta-alanine. This Thermus thermophilus (strain ATCC 27634 / DSM 579 / HB8) protein is Aspartate 1-decarboxylase.